We begin with the raw amino-acid sequence, 183 residues long: MHLLPELASHHAVSIPELLVSRDERQARQHVWLKRHPVPLVSFTVVAPGPIKDSEVTRRIFNHGVTALRALAAKQGWQIQEQAALVSASGPEGMLSIAAPARDLKLATIELEHSHPLGRLWDIDVLTPEGDILSRRDYSLPPRRCLLCEQSAAVCARGKTHQLTDLLNRMEALLNDVDACNVN.

It belongs to the CitX family.

The catalysed reaction is apo-[citrate lyase ACP] + 2'-(5''-triphospho-alpha-D-ribosyl)-3'-dephospho-CoA = holo-[citrate lyase ACP] + diphosphate. Functionally, transfers 2-(5''-triphosphoribosyl)-3'-dephosphocoenzyme-A on a serine residue to the apo-acyl carrier protein (gamma chain) of the citrate lyase to yield holo-acyl carrier protein. The protein is Apo-citrate lyase phosphoribosyl-dephospho-CoA transferase of Escherichia coli (strain SMS-3-5 / SECEC).